Reading from the N-terminus, the 636-residue chain is ABC transporter ATP-binding protein RamA (636 aa).

The next 5 membrane-spanning stretches (helical) occupy residues 45 to 65 (VLVL…PLAL), 78 to 98 (AGWW…LDSA), 175 to 195 (LVDV…ALLL), 269 to 289 (GVLV…RLAA), and 297 to 317 (LLAV…ASLL). The ABC transmembrane type-1 domain maps to 45 to 322 (VLVLLCSVAA…AASLLGAIVR (278 aa)). Positions 354 to 585 (LRLCGVRVLR…AGYREVFGAG (232 aa)) constitute an ABC transporter domain. 386 to 393 (GRSGAGKS) provides a ligand contact to ATP. The span at 589-606 (GAGAGAGAGADAGAGADA) shows a compositional bias: gly residues. The interval 589-636 (GAGAGAGAGADAGAGADAGPGPDSGAATAVGGSGPGPVRRPEPEEARP) is disordered. Residues 607–618 (GPGPDSGAATAV) are compositionally biased toward low complexity. Basic and acidic residues predominate over residues 627–636 (RRPEPEEARP).

It belongs to the ABC transporter superfamily.

Its subcellular location is the cell membrane. In terms of biological role, probably involved in exporting SapB from the cell. Expression of the ram locus (ramA, ramB and ramR) induces rapid aerial mycelium formation in S.lividans. The chain is ABC transporter ATP-binding protein RamA from Streptomyces coelicolor (strain ATCC BAA-471 / A3(2) / M145).